We begin with the raw amino-acid sequence, 265 residues long: RNA-binding protein 7 (265 aa).

An N-acetylglycine modification is found at glycine 2. The 78-residue stretch at 10-87 (RTLFVGNLET…RPIKIQFRSG (78 aa)) folds into the RRM domain. ZCCHC8 binding stretches follow at residues 25–35 (LLFELFHQAGP) and 59–76 (HEVS…IKLF). The interval 91–125 (ASQDASVSYPQHHVGNLSPTSTSPNSYERTVGNVS) is disordered. Polar residues predominate over residues 107–125 (LSPTSTSPNSYERTVGNVS). Residue serine 136 is modified to Phosphoserine; by MAPKAPK2. Residue serine 137 is modified to Phosphoserine. Arginine 152 is modified (omega-N-methylarginine). Disordered stretches follow at residues 166–224 (DQLG…HGSD) and 237–265 (DDRN…SSRH). A compositionally biased stretch (polar residues) spans 170–196 (FSPSAQPHGHTFNQSSSSQWRQDALSS). Position 203 is a phosphoserine (serine 203). Basic and acidic residues-rich tracts occupy residues 207–224 (LADR…HGSD) and 237–256 (DDRN…DSSR).

In terms of assembly, component of the nuclear exosome targeting (NEXT) complex composed of MTREX, ZCCHC8, and RBM7 that directs a subset of non-coding short-lived RNAs for exosomal degradation. Interacts with ZCCHC8 and SF3B2/SAP145. Binds to MTREX through ZCCHC8. Interacts with YWHAE and YWHAZ; these interactions are stress-dependent and RBM7 phosphorylation dependent; release RNA from the NEXT complex and may affect RNA targeting to the nuclear RNA exosomome for degradation. Interacts with MEPCE and LARP7, the core subunits of 7SK snRNP; upon genotoxic stress this interaction is enhanced, triggering the release of inactive P-TEFb complex from the core and P-TEFb complex activation. In terms of processing, phosphorylated at Ser-136 by MAPK14/p38-alpha-activated MAPKAPK2/MK2; this phosphorylation is stress-dependent; this phosphorylation decreases its RNA-binding capacity therefore affecting RNA nuclear exosome-mediated degradation. This phosphorylation mediates YWHAE and YWHAZ interactions.

Its subcellular location is the nucleus. It localises to the nucleoplasm. Functionally, RNA-binding subunit of the trimeric nuclear exosome targeting (NEXT) complex, a complex that functions as an RNA exosome cofactor that directs a subset of non-coding short-lived RNAs for exosomal degradation. NEXT is involved in surveillance and turnover of aberrant transcripts and non-coding RNAs. Binds preferentially polyuridine sequences and associates with newly synthesized RNAs, including pre-mRNAs and short-lived exosome substrates such as promoter upstream transcripts (PROMPTs), enhancer RNAs (eRNAs), and 3'-extended products from small nuclear RNAs (snRNAs). Participates in several biological processes including DNA damage response (DDR) and stress response. During stress response, activation of the p38MAPK-MK2 pathway decreases RBM7-RNA-binding and subsequently the RNA exosome degradation activities, thereby modulating the turnover of non-coding transcriptome. Participates in DNA damage response (DDR), through its interaction with MEPCE and LARP7, the core subunits of 7SK snRNP complex, that release the positive transcription elongation factor b (P-TEFb) complex from the 7SK snRNP. In turn, activation of P-TEFb complex induces the transcription of P-TEFb-dependent DDR genes to promote cell viability. The sequence is that of RNA-binding protein 7 from Mus musculus (Mouse).